The following is a 204-amino-acid chain: Holliday junction branch migration complex subunit RuvA (204 aa).

A domain I region spans residues 1-64; the sequence is MIGRLRGILL…EDAQLLYGFN (64 aa). The segment at 65–143 is domain II; sequence TVKERALFRE…GWGAGDLFTP (79 aa). Residues 144-155 form a flexible linker region; sequence FTDAAPTDSAAA. The domain III stretch occupies residues 156–204; that stretch reads SSNSAEEEAVSALLALGYKPTQASKVVSQIAKPDMSSEQLIREALKSMV.

This sequence belongs to the RuvA family. As to quaternary structure, homotetramer. Forms an RuvA(8)-RuvB(12)-Holliday junction (HJ) complex. HJ DNA is sandwiched between 2 RuvA tetramers; dsDNA enters through RuvA and exits via RuvB. An RuvB hexamer assembles on each DNA strand where it exits the tetramer. Each RuvB hexamer is contacted by two RuvA subunits (via domain III) on 2 adjacent RuvB subunits; this complex drives branch migration. In the full resolvosome a probable DNA-RuvA(4)-RuvB(12)-RuvC(2) complex forms which resolves the HJ.

The protein resides in the cytoplasm. The RuvA-RuvB-RuvC complex processes Holliday junction (HJ) DNA during genetic recombination and DNA repair, while the RuvA-RuvB complex plays an important role in the rescue of blocked DNA replication forks via replication fork reversal (RFR). RuvA specifically binds to HJ cruciform DNA, conferring on it an open structure. The RuvB hexamer acts as an ATP-dependent pump, pulling dsDNA into and through the RuvAB complex. HJ branch migration allows RuvC to scan DNA until it finds its consensus sequence, where it cleaves and resolves the cruciform DNA. The polypeptide is Holliday junction branch migration complex subunit RuvA (Vibrio parahaemolyticus serotype O3:K6 (strain RIMD 2210633)).